Here is a 578-residue protein sequence, read N- to C-terminus: Arginine--tRNA ligase (578 aa).

The 'HIGH' region motif lies at 123-133 (PNLAKEMHVGH).

The protein belongs to the class-I aminoacyl-tRNA synthetase family. Monomer.

The protein resides in the cytoplasm. It carries out the reaction tRNA(Arg) + L-arginine + ATP = L-arginyl-tRNA(Arg) + AMP + diphosphate. This is Arginine--tRNA ligase from Hahella chejuensis (strain KCTC 2396).